A 903-amino-acid polypeptide reads, in one-letter code: DNA gyrase subunit A (903 aa).

The region spanning Leu-36–Leu-499 is the Topo IIA-type catalytic domain. Tyr-124 (O-(5'-phospho-DNA)-tyrosine intermediate) is an active-site residue. Residues Gln-526 to Gly-532 carry the GyrA-box motif. A compositionally biased stretch (basic and acidic residues) spans Val-881–Glu-895. The segment at Val-881–Glu-903 is disordered.

It belongs to the type II topoisomerase GyrA/ParC subunit family. In terms of assembly, heterotetramer, composed of two GyrA and two GyrB chains. In the heterotetramer, GyrA contains the active site tyrosine that forms a transient covalent intermediate with DNA, while GyrB binds cofactors and catalyzes ATP hydrolysis.

It localises to the cytoplasm. The enzyme catalyses ATP-dependent breakage, passage and rejoining of double-stranded DNA.. Its function is as follows. A type II topoisomerase that negatively supercoils closed circular double-stranded (ds) DNA in an ATP-dependent manner to modulate DNA topology and maintain chromosomes in an underwound state. Negative supercoiling favors strand separation, and DNA replication, transcription, recombination and repair, all of which involve strand separation. Also able to catalyze the interconversion of other topological isomers of dsDNA rings, including catenanes and knotted rings. Type II topoisomerases break and join 2 DNA strands simultaneously in an ATP-dependent manner. This Fibrobacter succinogenes (strain ATCC 19169 / S85) protein is DNA gyrase subunit A.